We begin with the raw amino-acid sequence, 350 residues long: tRNA uridine(34) hydroxylase (350 aa).

The Rhodanese domain occupies 146 to 240 (DDPDAIFIDM…YARRAREQGL (95 aa)). Residue cysteine 200 is the Cysteine persulfide intermediate of the active site. The segment at 318–350 (QRRRRAGREKGNKIFNKSRGRLNSKLGIPDPTE) is disordered.

Belongs to the TrhO family.

It carries out the reaction uridine(34) in tRNA + AH2 + O2 = 5-hydroxyuridine(34) in tRNA + A + H2O. Its function is as follows. Catalyzes oxygen-dependent 5-hydroxyuridine (ho5U) modification at position 34 in tRNAs. The sequence is that of tRNA uridine(34) hydroxylase from Salmonella arizonae (strain ATCC BAA-731 / CDC346-86 / RSK2980).